A 615-amino-acid chain; its full sequence is Leucine aminopeptidase 2 (615 aa).

A peptide contacts are provided by residues 139–141 and 271–276; these read QCQ and PYGGME. Residue His300 participates in Zn(2+) binding. Residue Glu301 is the Proton acceptor of the active site. Residues His304 and Glu323 each coordinate Zn(2+). The active-site Proton donor is the Tyr386.

It belongs to the peptidase M1 family. Zn(2+) is required as a cofactor.

It localises to the cytoplasm. The protein localises to the nucleus. It carries out the reaction an epoxide + H2O = an ethanediol. Its function is as follows. Aminopeptidase that preferentially cleaves di- and tripeptides. Also has low epoxide hydrolase activity (in vitro). Can hydrolyze the epoxide leukotriene LTA(4) but it forms preferentially 5,6-dihydroxy-7,9,11,14-eicosatetraenoic acid rather than the cytokine leukotriene B(4) as the product compared to the homologous mammalian enzyme (in vitro). The protein is Leucine aminopeptidase 2 of Aspergillus oryzae (strain ATCC 42149 / RIB 40) (Yellow koji mold).